The following is a 259-amino-acid chain: Global transcriptional regulator CodY (259 aa).

A GAF domain region spans residues 1–155 (MELLAKTRKL…SSTVVGMEIL (155 aa)). The H-T-H motif DNA-binding region spans 203 to 222 (ASKIADRVGITRSVIVNALR). Ser215 bears the Phosphoserine mark.

This sequence belongs to the CodY family.

Its subcellular location is the cytoplasm. Functionally, DNA-binding global transcriptional regulator which is involved in the adaptive response to starvation and acts by directly or indirectly controlling the expression of numerous genes in response to nutrient availability. During rapid exponential growth, CodY is highly active and represses genes whose products allow adaptation to nutrient depletion. This is Global transcriptional regulator CodY from Bacillus mycoides (strain KBAB4) (Bacillus weihenstephanensis).